A 527-amino-acid chain; its full sequence is Type-2 serine--tRNA ligase (527 aa).

Residue A317 participates in L-serine binding. A Zn(2+)-binding site is contributed by C319. Residue R349 coordinates L-serine. ATP contacts are provided by residues 349–351 and 360–361; these read RWE and RV. 366-368 is a binding site for L-serine; it reads RIE. 2 residues coordinate Zn(2+): E368 and C478. Position 485 (R485) interacts with ATP.

It belongs to the class-II aminoacyl-tRNA synthetase family. Type-2 seryl-tRNA synthetase subfamily. In terms of assembly, homodimer. The cofactor is Zn(2+).

It localises to the cytoplasm. It catalyses the reaction tRNA(Ser) + L-serine + ATP = L-seryl-tRNA(Ser) + AMP + diphosphate + H(+). The enzyme catalyses tRNA(Sec) + L-serine + ATP = L-seryl-tRNA(Sec) + AMP + diphosphate + H(+). Its pathway is aminoacyl-tRNA biosynthesis; selenocysteinyl-tRNA(Sec) biosynthesis; L-seryl-tRNA(Sec) from L-serine and tRNA(Sec): step 1/1. Catalyzes the attachment of serine to tRNA(Ser). Is also able to aminoacylate tRNA(Sec) with serine, to form the misacylated tRNA L-seryl-tRNA(Sec), which will be further converted into selenocysteinyl-tRNA(Sec). The protein is Type-2 serine--tRNA ligase of Methanopyrus kandleri (strain AV19 / DSM 6324 / JCM 9639 / NBRC 100938).